The following is a 253-amino-acid chain: Imidazole glycerol phosphate synthase subunit HisF (253 aa).

Active-site residues include Asp11 and Asp130.

The protein belongs to the HisA/HisF family. In terms of assembly, heterodimer of HisH and HisF.

Its subcellular location is the cytoplasm. It carries out the reaction 5-[(5-phospho-1-deoxy-D-ribulos-1-ylimino)methylamino]-1-(5-phospho-beta-D-ribosyl)imidazole-4-carboxamide + L-glutamine = D-erythro-1-(imidazol-4-yl)glycerol 3-phosphate + 5-amino-1-(5-phospho-beta-D-ribosyl)imidazole-4-carboxamide + L-glutamate + H(+). Its pathway is amino-acid biosynthesis; L-histidine biosynthesis; L-histidine from 5-phospho-alpha-D-ribose 1-diphosphate: step 5/9. In terms of biological role, IGPS catalyzes the conversion of PRFAR and glutamine to IGP, AICAR and glutamate. The HisF subunit catalyzes the cyclization activity that produces IGP and AICAR from PRFAR using the ammonia provided by the HisH subunit. This Acidobacterium capsulatum (strain ATCC 51196 / DSM 11244 / BCRC 80197 / JCM 7670 / NBRC 15755 / NCIMB 13165 / 161) protein is Imidazole glycerol phosphate synthase subunit HisF.